The primary structure comprises 131 residues: Profilin (131 aa).

This sequence belongs to the profilin family. As to quaternary structure, occurs in many kinds of cells as a complex with monomeric actin in a 1:1 ratio.

Its subcellular location is the cytoplasm. The protein localises to the cytoskeleton. Binds to actin and affects the structure of the cytoskeleton. At high concentrations, profilin prevents the polymerization of actin, whereas it enhances it at low concentrations. By binding to PIP2, it inhibits the formation of IP3 and DG. This is Profilin from Prunus avium (Cherry).